The following is a 404-amino-acid chain: Probable tRNA sulfurtransferase (404 aa).

The region spanning 61–166 is the THUMP domain; sequence EAVSERLKDV…SGYSYIMCDE (106 aa). Residues 184-185, 209-210, Arg-266, Gly-288, and Gln-297 contribute to the ATP site; these read LL and HF.

This sequence belongs to the ThiI family.

It localises to the cytoplasm. It catalyses the reaction [ThiI sulfur-carrier protein]-S-sulfanyl-L-cysteine + a uridine in tRNA + 2 reduced [2Fe-2S]-[ferredoxin] + ATP + H(+) = [ThiI sulfur-carrier protein]-L-cysteine + a 4-thiouridine in tRNA + 2 oxidized [2Fe-2S]-[ferredoxin] + AMP + diphosphate. The enzyme catalyses [ThiS sulfur-carrier protein]-C-terminal Gly-Gly-AMP + S-sulfanyl-L-cysteinyl-[cysteine desulfurase] + AH2 = [ThiS sulfur-carrier protein]-C-terminal-Gly-aminoethanethioate + L-cysteinyl-[cysteine desulfurase] + A + AMP + 2 H(+). Its pathway is cofactor biosynthesis; thiamine diphosphate biosynthesis. Functionally, catalyzes the ATP-dependent transfer of a sulfur to tRNA to produce 4-thiouridine in position 8 of tRNAs, which functions as a near-UV photosensor. Also catalyzes the transfer of sulfur to the sulfur carrier protein ThiS, forming ThiS-thiocarboxylate. This is a step in the synthesis of thiazole, in the thiamine biosynthesis pathway. The sulfur is donated as persulfide by IscS. The sequence is that of Probable tRNA sulfurtransferase from Bacillus cereus (strain AH820).